The chain runs to 410 residues: MVLKAEHTRSPSATLPSNVPSCRSLSSSEDGPSGPSSLADGGLAHNLQDSVRHRILYLSEQLRVEKASRDGNTVSYLKLVSKADRHQVPHIQQAFEKVNQRASATIAQIEHRLHQCHQQLQELEEGCRPEGLLLMAESDPANCEPPSEKALLSEPPEPGGEDGPVNLPHASRPFILESRFQSLQQGTCLETEDVAQQQNLLLQKVKAELEEAKRFHISLQESYHSLKERSLTDLQLLLESLQEEKCRQALMEEQVNGRLQGQLNEIYNLKHNLACSEERMAYLSYERAKEIWEITETFKSRISKLEMLQQVTQLEAAEHLQSRPPQMLFKFLSPRLSLATVLLVFVSTLCACPSSLISSRLCTCTMLMLIGLGVLAWQRWRAIPATDWQEWVPSRCRLYSKDSGPPADGP.

Residues 1–43 (MVLKAEHTRSPSATLPSNVPSCRSLSSSEDGPSGPSSLADGGL) form a disordered region. Positions 10–23 (SPSATLPSNVPSCR) are enriched in polar residues. Residues 24–38 (SLSSSEDGPSGPSSL) show a composition bias toward low complexity. Positions 93-128 (QAFEKVNQRASATIAQIEHRLHQCHQQLQELEEGCR) form a coiled coil. The interval 137–164 (ESDPANCEPPSEKALLSEPPEPGGEDGP) is disordered. A coiled-coil region spans residues 185–245 (QGTCLETEDV…LLLESLQEEK (61 aa)). The chain crosses the membrane as a helical span at residues 336 to 358 (LSLATVLLVFVSTLCACPSSLIS).

It belongs to the TEX28 family. In terms of tissue distribution, testis specific.

The protein resides in the membrane. The polypeptide is Testis-specific protein TEX28 (TEX28) (Homo sapiens (Human)).